Reading from the N-terminus, the 483-residue chain is Aspartyl/glutamyl-tRNA(Asn/Gln) amidotransferase subunit B (483 aa).

Belongs to the GatB/GatE family. GatB subfamily. Heterotrimer of A, B and C subunits.

It catalyses the reaction L-glutamyl-tRNA(Gln) + L-glutamine + ATP + H2O = L-glutaminyl-tRNA(Gln) + L-glutamate + ADP + phosphate + H(+). It carries out the reaction L-aspartyl-tRNA(Asn) + L-glutamine + ATP + H2O = L-asparaginyl-tRNA(Asn) + L-glutamate + ADP + phosphate + 2 H(+). In terms of biological role, allows the formation of correctly charged Asn-tRNA(Asn) or Gln-tRNA(Gln) through the transamidation of misacylated Asp-tRNA(Asn) or Glu-tRNA(Gln) in organisms which lack either or both of asparaginyl-tRNA or glutaminyl-tRNA synthetases. The reaction takes place in the presence of glutamine and ATP through an activated phospho-Asp-tRNA(Asn) or phospho-Glu-tRNA(Gln). In Herpetosiphon aurantiacus (strain ATCC 23779 / DSM 785 / 114-95), this protein is Aspartyl/glutamyl-tRNA(Asn/Gln) amidotransferase subunit B.